A 60-amino-acid chain; its full sequence is Large ribosomal subunit protein bL32 (60 aa).

A disordered region spans residues 1–60 (MAVQQNKKSPSKRGMHRSHNALTVPGIAVEPTTGETHLRHHISPNGFYRGRQVLKNKSEA). Positions 9–19 (SPSKRGMHRSH) are enriched in basic residues.

This sequence belongs to the bacterial ribosomal protein bL32 family.

This Paracidovorax citrulli (strain AAC00-1) (Acidovorax citrulli) protein is Large ribosomal subunit protein bL32.